A 98-amino-acid chain; its full sequence is Cell cycle protein GpsB (98 aa).

Positions 34 to 72 (LDMVIKDYEAFHQEIEELQQENLQLKKQLEEANKRQPAQ) form a coiled coil.

This sequence belongs to the GpsB family. As to quaternary structure, forms polymers through the coiled coil domains. Interacts with PBP1, MreC and EzrA.

The protein localises to the cytoplasm. Its function is as follows. Divisome component that associates with the complex late in its assembly, after the Z-ring is formed, and is dependent on DivIC and PBP2B for its recruitment to the divisome. Together with EzrA, is a key component of the system that regulates PBP1 localization during cell cycle progression. Its main role could be the removal of PBP1 from the cell pole after pole maturation is completed. Also contributes to the recruitment of PBP1 to the division complex. Not essential for septum formation. The chain is Cell cycle protein GpsB from Bacillus licheniformis (strain ATCC 14580 / DSM 13 / JCM 2505 / CCUG 7422 / NBRC 12200 / NCIMB 9375 / NCTC 10341 / NRRL NRS-1264 / Gibson 46).